Consider the following 522-residue polypeptide: Cytochrome P450 1A1 (522 aa).

Residue F229 coordinates substrate. C463 provides a ligand contact to heme.

It belongs to the cytochrome P450 family. Heme serves as cofactor. As to expression, liver.

It localises to the endoplasmic reticulum membrane. Its subcellular location is the microsome membrane. The catalysed reaction is an organic molecule + reduced [NADPH--hemoprotein reductase] + O2 = an alcohol + oxidized [NADPH--hemoprotein reductase] + H2O + H(+). Cytochromes P450 are a group of heme-thiolate monooxygenases. They oxidize a variety of structurally unrelated compounds, including steroids, fatty acids, and xenobiotics. This chain is Cytochrome P450 1A1 (cyp1a1), found in Oncorhynchus mykiss (Rainbow trout).